A 652-amino-acid polypeptide reads, in one-letter code: Acetyl-coenzyme A synthetase (652 aa).

Residues 191–194, Thr311, and Asn335 each bind CoA; that span reads RAGR. ATP-binding positions include 387-389, 411-416, Asp500, and Arg515; these read GEP and DTWWQT. Ser523 lines the CoA pocket. Arg526 is a binding site for ATP. Val537, His539, and Ile542 together coordinate Mg(2+). Arg584 is a binding site for CoA. Lys609 is subject to N6-acetyllysine.

The protein belongs to the ATP-dependent AMP-binding enzyme family. The cofactor is Mg(2+). Post-translationally, acetylated. Deacetylation by the SIR2-homolog deacetylase activates the enzyme.

It carries out the reaction acetate + ATP + CoA = acetyl-CoA + AMP + diphosphate. Catalyzes the conversion of acetate into acetyl-CoA (AcCoA), an essential intermediate at the junction of anabolic and catabolic pathways. Acs undergoes a two-step reaction. In the first half reaction, Acs combines acetate with ATP to form acetyl-adenylate (AcAMP) intermediate. In the second half reaction, it can then transfer the acetyl group from AcAMP to the sulfhydryl group of CoA, forming the product AcCoA. In terms of biological role, enables the cell to use acetate during aerobic growth to generate energy via the TCA cycle, and biosynthetic compounds via the glyoxylate shunt. Acetylates CheY, the response regulator involved in flagellar movement and chemotaxis. This chain is Acetyl-coenzyme A synthetase, found in Citrobacter koseri (strain ATCC BAA-895 / CDC 4225-83 / SGSC4696).